Reading from the N-terminus, the 433-residue chain is Enolase (433 aa).

Q164 contacts (2R)-2-phosphoglycerate. Catalysis depends on E206, which acts as the Proton donor. Positions 243, 289, and 316 each coordinate Mg(2+). Residues K341, R370, S371, and K392 each coordinate (2R)-2-phosphoglycerate. Catalysis depends on K341, which acts as the Proton acceptor.

The protein belongs to the enolase family. It depends on Mg(2+) as a cofactor.

The protein localises to the cytoplasm. The protein resides in the secreted. It is found in the cell surface. It carries out the reaction (2R)-2-phosphoglycerate = phosphoenolpyruvate + H2O. The protein operates within carbohydrate degradation; glycolysis; pyruvate from D-glyceraldehyde 3-phosphate: step 4/5. In terms of biological role, catalyzes the reversible conversion of 2-phosphoglycerate (2-PG) into phosphoenolpyruvate (PEP). It is essential for the degradation of carbohydrates via glycolysis. The sequence is that of Enolase from Borreliella afzelii (strain PKo) (Borrelia afzelii).